A 412-amino-acid chain; its full sequence is Serine hydroxymethyltransferase (412 aa).

(6S)-5,6,7,8-tetrahydrofolate contacts are provided by residues leucine 117 and 121 to 123 (GHL). Lysine 226 is subject to N6-(pyridoxal phosphate)lysine.

It belongs to the SHMT family. Homodimer. Pyridoxal 5'-phosphate is required as a cofactor.

The protein resides in the cytoplasm. The catalysed reaction is (6R)-5,10-methylene-5,6,7,8-tetrahydrofolate + glycine + H2O = (6S)-5,6,7,8-tetrahydrofolate + L-serine. The protein operates within one-carbon metabolism; tetrahydrofolate interconversion. It participates in amino-acid biosynthesis; glycine biosynthesis; glycine from L-serine: step 1/1. Its function is as follows. Catalyzes the reversible interconversion of serine and glycine with tetrahydrofolate (THF) serving as the one-carbon carrier. This reaction serves as the major source of one-carbon groups required for the biosynthesis of purines, thymidylate, methionine, and other important biomolecules. Also exhibits THF-independent aldolase activity toward beta-hydroxyamino acids, producing glycine and aldehydes, via a retro-aldol mechanism. In Staphylococcus aureus (strain bovine RF122 / ET3-1), this protein is Serine hydroxymethyltransferase.